We begin with the raw amino-acid sequence, 339 residues long: Phosphate acyltransferase (339 aa).

The protein belongs to the PlsX family. Homodimer. Probably interacts with PlsY.

Its subcellular location is the cytoplasm. The enzyme catalyses a fatty acyl-[ACP] + phosphate = an acyl phosphate + holo-[ACP]. Its pathway is lipid metabolism; phospholipid metabolism. Functionally, catalyzes the reversible formation of acyl-phosphate (acyl-PO(4)) from acyl-[acyl-carrier-protein] (acyl-ACP). This enzyme utilizes acyl-ACP as fatty acyl donor, but not acyl-CoA. In Pasteurella multocida (strain Pm70), this protein is Phosphate acyltransferase.